A 115-amino-acid chain; its full sequence is Large ribosomal subunit protein bL20 (115 aa).

It belongs to the bacterial ribosomal protein bL20 family.

Binds directly to 23S ribosomal RNA and is necessary for the in vitro assembly process of the 50S ribosomal subunit. It is not involved in the protein synthesizing functions of that subunit. This Chlorobium limicola (strain DSM 245 / NBRC 103803 / 6330) protein is Large ribosomal subunit protein bL20.